A 65-amino-acid polypeptide reads, in one-letter code: Large ribosomal subunit protein bL35 (65 aa).

Residues 1–45 are compositionally biased toward basic residues; that stretch reads MPKMKSHSGAKKRFKKTGNGKIKRKKANKGHLLTKKNAKRKRQLR. Positions 1–65 are disordered; the sequence is MPKMKSHSGA…RDRIKRMLST (65 aa). Basic and acidic residues predominate over residues 48 to 57; the sequence is VVVDDKANRD.

It belongs to the bacterial ribosomal protein bL35 family.

The sequence is that of Large ribosomal subunit protein bL35 from Salinibacter ruber (strain DSM 13855 / M31).